The sequence spans 263 residues: Carbon monoxide dehydrogenase accessory protein CooC (263 aa).

Residue 7 to 14 (GKGGVGKS) participates in ATP binding.

Functionally, involved in the insertion of nickel into the carbon monoxide dehydrogenase (CODH). This Rhodospirillum rubrum protein is Carbon monoxide dehydrogenase accessory protein CooC (cooC).